Here is a 92-residue protein sequence, read N- to C-terminus: LYR motif-containing protein 4 homolog (92 aa).

The stretch at 40 to 68 (ANKAIRDFAEIDRQMEAGKQNLELIRRQV) forms a coiled coil.

Belongs to the complex I LYR family. In terms of assembly, component of the mitochondrial core iron-sulfur cluster (ISC) assembly complex at least composed of the cysteine desulfurase Nfs1, the scaffold protein IscU, the accessory protein bcn92/Isd11/Lyrm4, and probably fh/frataxin. Interacts with Nfs1.

The protein localises to the mitochondrion. Stabilizing factor of the core iron-sulfur cluster (ISC) assembly complex that regulates the stability and cysteine desulfurase activity of Nfs1 and participates in the [2Fe-2S] clusters assembly on the scaffolding protein IscU. This chain is LYR motif-containing protein 4 homolog, found in Drosophila subobscura (Fruit fly).